A 179-amino-acid chain; its full sequence is GTP-dependent dephospho-CoA kinase (179 aa).

Asp49, Val50, Val51, Asp68, Lys70, and Glu126 together coordinate GTP.

It belongs to the GTP-dependent DPCK family.

The enzyme catalyses 3'-dephospho-CoA + GTP = GDP + CoA + H(+). It participates in cofactor biosynthesis; coenzyme A biosynthesis. Functionally, catalyzes the GTP-dependent phosphorylation of the 3'-hydroxyl group of dephosphocoenzyme A to form coenzyme A (CoA). The sequence is that of GTP-dependent dephospho-CoA kinase from Pyrococcus abyssi (strain GE5 / Orsay).